A 728-amino-acid chain; its full sequence is Nucleolar GTP-binding protein 2 (728 aa).

Met1 is subject to N-acetylmethionine. The tract at residues 1-33 (MVKPKYKGRSTINRSAASTNPDRVQGAGGQNMR) is disordered. Over residues 10-22 (STINRSAASTNPD) the composition is skewed to polar residues. The CP-type G domain maps to 207–368 (WGELYKVIDS…LIDCPGVVYP (162 aa)). Residues 317 to 324 (GYPNVGKS) and 361 to 365 (DCPGV) contribute to the GTP site. Disordered stretches follow at residues 462-521 (PPNA…RNSE), 538-595 (VGPQ…DTKA), and 636-728 (YKEE…RQKQ). Low complexity predominate over residues 480–489 (EVPTETTQNN). Residues 498–520 (EVERSDSITEKEPEGDCSQDRNS) show a composition bias toward basic and acidic residues. At Ser504 the chain carries Phosphoserine. Residues 553–586 (SDLEDLESSGEEEEQEQEQPGEDAEEERSPDTQE) are compositionally biased toward acidic residues. Basic residues predominate over residues 718–728 (KHRRNKFRQKQ).

The protein belongs to the TRAFAC class YlqF/YawG GTPase family. NOG2 subfamily. As to quaternary structure, interacts with LYAR and RPL23A. Interacts with the nuclear importin-beta receptor and, at a lower extent, with importin-alpha.

Its subcellular location is the nucleus. It localises to the nucleolus. GTPase that associates with pre-60S ribosomal subunits in the nucleolus and is required for their nuclear export and maturation. May promote cell proliferation possibly by increasing p53/TP53 protein levels, and consequently those of its downstream product CDKN1A/p21, and decreasing RPL23A protein levels. In Mus musculus (Mouse), this protein is Nucleolar GTP-binding protein 2 (Gnl2).